We begin with the raw amino-acid sequence, 123 residues long: MLPTENRLRRREDFATAVRRGRRAGRPLLVVHLRSGATDPHAPGESAPPTRAGFVVSKAVGGAVVRNKVKRRLRHLMRDRVALLPPGSLVVVRALPGAGDADHAQLAQDLDAALQRLLGGGAR.

The protein belongs to the RnpA family. In terms of assembly, consists of a catalytic RNA component (M1 or rnpB) and a protein subunit.

The catalysed reaction is Endonucleolytic cleavage of RNA, removing 5'-extranucleotides from tRNA precursor.. RNaseP catalyzes the removal of the 5'-leader sequence from pre-tRNA to produce the mature 5'-terminus. It can also cleave other RNA substrates such as 4.5S RNA. The protein component plays an auxiliary but essential role in vivo by binding to the 5'-leader sequence and broadening the substrate specificity of the ribozyme. The polypeptide is Ribonuclease P protein component (Streptomyces avermitilis (strain ATCC 31267 / DSM 46492 / JCM 5070 / NBRC 14893 / NCIMB 12804 / NRRL 8165 / MA-4680)).